The primary structure comprises 61 residues: Ferredoxin (61 aa).

The 27-residue stretch at 2-28 (LYITEECTYCGACEPECPTNAISAGSE) folds into the 4Fe-4S ferredoxin-type domain. [4Fe-4S] cluster is bound by residues cysteine 8, cysteine 11, cysteine 14, cysteine 18, cysteine 37, cysteine 40, cysteine 49, and cysteine 53.

It depends on [4Fe-4S] cluster as a cofactor.

Its function is as follows. Ferredoxins are iron-sulfur proteins that transfer electrons in a wide variety of metabolic reactions. The sequence is that of Ferredoxin from Chlorobaculum thiosulfatiphilum (Chlorobium limicola f.sp. thiosulfatophilum).